The sequence spans 183 residues: MDEYKNIEEKMKKTVSVLKDELNTVRAGRANAAILDRITVDYYGVPTPINQLGTISVPEPRVIVIQPWDAQILKEIEKEIQKSDIGINPNNDGKVIRLVFPPLTEERRKELTKLAKKYGEDAKVAIRSIRRDGIEKKKAMKKNGEITEDDLKSAEKDIQNLTDKYIAEIDKLIEIKEKEILEV.

The protein belongs to the RRF family.

The protein localises to the cytoplasm. Its function is as follows. Responsible for the release of ribosomes from messenger RNA at the termination of protein biosynthesis. May increase the efficiency of translation by recycling ribosomes from one round of translation to another. This Acetivibrio thermocellus (strain ATCC 27405 / DSM 1237 / JCM 9322 / NBRC 103400 / NCIMB 10682 / NRRL B-4536 / VPI 7372) (Clostridium thermocellum) protein is Ribosome-recycling factor.